The chain runs to 249 residues: DNA polymerase sliding clamp (249 aa).

Belongs to the PCNA family. In terms of assembly, homotrimer. The subunits circularize to form a toroid; DNA passes through its center. Replication factor C (RFC) is required to load the toroid on the DNA.

Sliding clamp subunit that acts as a moving platform for DNA processing. Responsible for tethering the catalytic subunit of DNA polymerase and other proteins to DNA during high-speed replication. This is DNA polymerase sliding clamp from Pyrococcus horikoshii (strain ATCC 700860 / DSM 12428 / JCM 9974 / NBRC 100139 / OT-3).